The chain runs to 351 residues: Phospho-N-acetylmuramoyl-pentapeptide-transferase (351 aa).

10 helical membrane passes run 17–37 (MAYA…YIIL), 62–82 (GIPT…LVFW), 85–105 (ILNV…FLGF), 130–150 (IIFS…HVSV), 158–178 (SFQI…LISA), 190–210 (GLAI…AYLT), 230–250 (LVIF…FNAY), 254–274 (IMMG…AALI), 279–299 (ILFS…IIQV), and 328–348 (QVVI…LSTI).

The protein belongs to the glycosyltransferase 4 family. MraY subfamily. Requires Mg(2+) as cofactor.

The protein localises to the cell inner membrane. It carries out the reaction UDP-N-acetyl-alpha-D-muramoyl-L-alanyl-gamma-D-glutamyl-meso-2,6-diaminopimeloyl-D-alanyl-D-alanine + di-trans,octa-cis-undecaprenyl phosphate = di-trans,octa-cis-undecaprenyl diphospho-N-acetyl-alpha-D-muramoyl-L-alanyl-D-glutamyl-meso-2,6-diaminopimeloyl-D-alanyl-D-alanine + UMP. It functions in the pathway cell wall biogenesis; peptidoglycan biosynthesis. Functionally, catalyzes the initial step of the lipid cycle reactions in the biosynthesis of the cell wall peptidoglycan: transfers peptidoglycan precursor phospho-MurNAc-pentapeptide from UDP-MurNAc-pentapeptide onto the lipid carrier undecaprenyl phosphate, yielding undecaprenyl-pyrophosphoryl-MurNAc-pentapeptide, known as lipid I. This is Phospho-N-acetylmuramoyl-pentapeptide-transferase from Borreliella burgdorferi (strain ATCC 35210 / DSM 4680 / CIP 102532 / B31) (Borrelia burgdorferi).